A 112-amino-acid polypeptide reads, in one-letter code: Peptidyl-prolyl cis-trans isomerase FKBP12 (112 aa).

Positions 1 to 22 (MGVEKQIIRAGTGPNPSRGQNV) are disordered. In terms of domain architecture, PPIase FKBP-type spans 19–112 (GQNVTVHCTG…EFEIEVLRAQ (94 aa)). Cys26 and Cys80 are disulfide-bonded.

The protein belongs to the FKBP-type PPIase family. In terms of assembly, interacts with FK506.

It is found in the cytoplasm. It carries out the reaction [protein]-peptidylproline (omega=180) = [protein]-peptidylproline (omega=0). PPIases accelerate the folding of proteins. It catalyzes the cis-trans isomerization of proline imidic peptide bonds in oligopeptides. This Vicia faba (Broad bean) protein is Peptidyl-prolyl cis-trans isomerase FKBP12 (FKBP12).